We begin with the raw amino-acid sequence, 549 residues long: Frizzled/smoothened-like sans CRD protein A (549 aa).

The signal sequence occupies residues 1–22 (MKFNFKLILIILIINQILIINC). Residues 23–89 (KENKILEIYK…EVNTLSLMIK (67 aa)) are Extracellular-facing. Asn-63 carries an N-linked (GlcNAc...) asparagine glycan. The chain crosses the membrane as a helical span at residues 90-110 (ITGTISFIASLILLLIYSPLI). Over 111-119 (NRMGYNRHT) the chain is Cytoplasmic. A helical transmembrane segment spans residues 120 to 140 (IGIFFLTFSVFLIMLTDIIYV). Topologically, residues 141 to 162 (HHGNDLICPQSHRYSRQNDSGC) are extracellular. Asn-158 carries an N-linked (GlcNAc...) asparagine glycan. A helical transmembrane segment spans residues 163–183 (TITGILFQYGCIAAVLFWATL). Residues 184 to 198 (SLDLYLTLKKISTKK) are Cytoplasmic-facing. The helical transmembrane segment at 199–219 (VEKWYLIILTLIALILTFVPL) threads the bilayer. The Extracellular portion of the chain corresponds to 220-241 (VKKSYGYLVTGLACWILDSTDQ). A helical membrane pass occupies residues 242–262 (IIFFWAPFTAILGIGSILIVL). Over 263 to 287 (VVYEIYKISKITKQNRGIFQSHIRP) the chain is Cytoplasmic. The helical transmembrane segment at 288–308 (LLMVLFIFGQFLFILAFNALI) threads the bilayer. Topologically, residues 309–346 (NNKYDEYSARMDSYIDCLFSSSSYSYLCRLKTFPFEME) are extracellular. Residues 347-367 (FIVLFFLRLIGIEVLIFYGFT) traverse the membrane as a helical segment. Over 368–549 (QQTKKILLHS…NNNSNNDENN (182 aa)) the chain is Cytoplasmic. 2 stretches are compositionally biased toward low complexity: residues 417–474 (NNNN…SQQN) and 536–549 (NKNI…DENN). 2 disordered regions span residues 417-483 (NNNN…QKLS) and 528-549 (QYEE…DENN). Residues 432–475 (NNLNNNLNNNNLNNNNNLNNLNNLNINNNLKNSQNNLNNSQQNE) are a coiled coil.

This sequence belongs to the G-protein coupled receptor Fz/Smo family.

It localises to the membrane. This Dictyostelium discoideum (Social amoeba) protein is Frizzled/smoothened-like sans CRD protein A (fscA).